We begin with the raw amino-acid sequence, 405 residues long: Putative colanic acid polymerase (405 aa).

Helical transmembrane passes span 5 to 25 (IRICSYLLLPLIYLLVNVKIA), 27 to 47 (LGESFPITIVTFLPVLLLLFL), 55 to 75 (LMIALGIGAGLTAFNYLFGQS), 81 to 101 (YVTSTMLFVYIVIIIGMVWSI), 117 to 137 (FFYLVVGLVVALAAVEMAQII), 171 to 191 (TALYFEPAFFALALISIWLSI), 204 to 224 (MILAGIILSGSFSGVMTFILF), 244 to 264 (PLALISLAVFLVGVVIAFPYI), 282 to 302 (IVGPLVMVGYSLTHIDGVVRF), 327 to 347 (GLYLLIIYFSWFAVFLSLWYM), and 376 to 396 (LFFTGSIFSPEYAFLIVCPFI).

Its subcellular location is the cell inner membrane. It participates in slime biogenesis; slime polysaccharide biosynthesis. The protein is Putative colanic acid polymerase (wcaD) of Escherichia coli (strain K12).